Consider the following 418-residue polypeptide: Homeobox protein H2.0 (418 aa).

Over residues 190-216 the composition is skewed to basic residues; sequence QHQKQQHQQHHHHQHHPKHLHQQHKPP. Disordered stretches follow at residues 190 to 223, 259 to 296, and 354 to 418; these read QHQKQQHQQHHHHQHHPKHLHQQHKPPPHNSTTA, TSPAAAAAATSQNGAHGHGGGNGQGNASAGSNGKRKRS, and RENL…NVVE. Over residues 259–273 the composition is skewed to low complexity; it reads TSPAAAAAATSQNGA. The homeobox DNA-binding region spans 295 to 354; sequence RSWSRAVFSNLQRKGLEIQFQQQKYITKPDRRKLAARLNLTDAQVKVWFQNRRMKWRHTR. Positions 391 to 403 are enriched in low complexity; that stretch reads DYSSDSCSSVDLS.

This sequence belongs to the H2.0 homeobox family. Expressed in cells of the visceral musculature and its anlagen.

The protein localises to the nucleus. May play a role in pattern formation during embryonic and imaginal development. Is not essential for visceral muscle morphogenesis. This is Homeobox protein H2.0 (H2.0) from Drosophila melanogaster (Fruit fly).